Consider the following 297-residue polypeptide: uncharacterized protein (297 aa).

Residues 187–285 (EKLIATLHAS…GYAPSAVLKN (99 aa)) enclose the HTH araC/xylS-type domain. 2 DNA-binding regions (H-T-H motif) span residues 204–225 (ADMAATIPCSEAWLRRLFLRYT) and 252–275 (VGEVADTLNFFDSFHFSKAFKHKF).

This is an uncharacterized protein from Escherichia coli (strain K12).